Here is a 300-residue protein sequence, read N- to C-terminus: Protoheme IX farnesyltransferase (300 aa).

9 consecutive transmembrane segments (helical) span residues 31-51, 52-72, 92-112, 123-145, 152-172, 179-199, 225-245, 247-267, and 280-300; these read VMSLVVFTGFSGMWLAPNSLH, PFISVIALICIAIGAGSAGAI, IVRGAIEADEALSFGLIMAFF, FLSALLLLFTIFYYICIYTMWLK, IVIGGAAGALPPVIGYASVSG, VILFLIIFIWTPPHSWALALF, ILIYSVLLFLTSLMPFFVGMS, IIYLVIAAVLGLVFLYYSISL, and FFAYSIFYLFFIFLLLDFCRV.

It belongs to the UbiA prenyltransferase family. Protoheme IX farnesyltransferase subfamily.

Its subcellular location is the cell inner membrane. It catalyses the reaction heme b + (2E,6E)-farnesyl diphosphate + H2O = Fe(II)-heme o + diphosphate. It functions in the pathway porphyrin-containing compound metabolism; heme O biosynthesis; heme O from protoheme: step 1/1. In terms of biological role, converts heme B (protoheme IX) to heme O by substitution of the vinyl group on carbon 2 of heme B porphyrin ring with a hydroxyethyl farnesyl side group. This is Protoheme IX farnesyltransferase from Rickettsia bellii (strain OSU 85-389).